The sequence spans 253 residues: Large ribosomal subunit protein uL4 (253 aa).

The tract at residues 62-107 (WGSGRGVSHVPRLKNSSRAARVPHAKGGRRAHPPKPEADRSEKVNT) is disordered. Residues 82–94 (RVPHAKGGRRAHP) are compositionally biased toward basic residues. The segment covering 95–107 (PKPEADRSEKVNT) has biased composition (basic and acidic residues).

Belongs to the universal ribosomal protein uL4 family. Part of the 50S ribosomal subunit.

Functionally, one of the primary rRNA binding proteins, this protein initially binds near the 5'-end of the 23S rRNA. It is important during the early stages of 50S assembly. It makes multiple contacts with different domains of the 23S rRNA in the assembled 50S subunit and ribosome. Its function is as follows. Forms part of the polypeptide exit tunnel. The chain is Large ribosomal subunit protein uL4 from Methanosarcina mazei (strain ATCC BAA-159 / DSM 3647 / Goe1 / Go1 / JCM 11833 / OCM 88) (Methanosarcina frisia).